The following is a 368-amino-acid chain: 4-hydroxy-3-methylbut-2-en-1-yl diphosphate synthase (flavodoxin) (368 aa).

[4Fe-4S] cluster is bound by residues Cys-271, Cys-274, Cys-306, and Glu-313.

Belongs to the IspG family. [4Fe-4S] cluster is required as a cofactor.

The catalysed reaction is (2E)-4-hydroxy-3-methylbut-2-enyl diphosphate + oxidized [flavodoxin] + H2O + 2 H(+) = 2-C-methyl-D-erythritol 2,4-cyclic diphosphate + reduced [flavodoxin]. Its pathway is isoprenoid biosynthesis; isopentenyl diphosphate biosynthesis via DXP pathway; isopentenyl diphosphate from 1-deoxy-D-xylulose 5-phosphate: step 5/6. In terms of biological role, converts 2C-methyl-D-erythritol 2,4-cyclodiphosphate (ME-2,4cPP) into 1-hydroxy-2-methyl-2-(E)-butenyl 4-diphosphate. The polypeptide is 4-hydroxy-3-methylbut-2-en-1-yl diphosphate synthase (flavodoxin) (Histophilus somni (strain 129Pt) (Haemophilus somnus)).